Consider the following 253-residue polypeptide: MNILITNDDGINAPGIIALAKEISKEHKVTIVAPKDQKSASSHSISIHSPIKIKEEFIEGLDCKAYSVSGTPADCTQVGLSFLKENIELVISGINKGPNVGTDILYSGTVSAAIEGTIYGIPSIAVSMDVEYGKDDEDYSKAVKWAIKVLDIAKEEYLKSDVVLNLNIPNFNERDIKGIKVCKIGRSTYKTEYILLESNEEGDLYTTKGTRNAIKEEESDLYYLYQGYVTLTPLHFDFTDFAILSDVTKIFEK.

The a divalent metal cation site is built by Asp8, Asp9, Ser39, and Asn95.

It belongs to the SurE nucleotidase family. The cofactor is a divalent metal cation.

It localises to the cytoplasm. It carries out the reaction a ribonucleoside 5'-phosphate + H2O = a ribonucleoside + phosphate. Functionally, nucleotidase that shows phosphatase activity on nucleoside 5'-monophosphates. This Clostridium beijerinckii (strain ATCC 51743 / NCIMB 8052) (Clostridium acetobutylicum) protein is 5'-nucleotidase SurE.